An 80-amino-acid polypeptide reads, in one-letter code: Putative defensin-like protein 15 (80 aa).

The first 29 residues, 1–29 (MAKFASIITFIYAALVLFAAFEVPTMVEA), serve as a signal peptide directing secretion. Q30 carries the pyrrolidone carboxylic acid modification. 4 cysteine pairs are disulfide-bonded: C33–C80, C44–C65, C50–C74, and C54–C76.

Belongs to the DEFL family.

It localises to the secreted. In terms of biological role, confers broad-spectrum resistance to pathogens. This is Putative defensin-like protein 15 (PDF1.2B) from Arabidopsis thaliana (Mouse-ear cress).